A 247-amino-acid polypeptide reads, in one-letter code: tRNA pseudouridine synthase A (247 aa).

D53 serves as the catalytic Nucleophile. Y111 provides a ligand contact to substrate.

This sequence belongs to the tRNA pseudouridine synthase TruA family. Homodimer.

It carries out the reaction uridine(38/39/40) in tRNA = pseudouridine(38/39/40) in tRNA. Functionally, formation of pseudouridine at positions 38, 39 and 40 in the anticodon stem and loop of transfer RNAs. The polypeptide is tRNA pseudouridine synthase A (Bacillus velezensis (strain DSM 23117 / BGSC 10A6 / LMG 26770 / FZB42) (Bacillus amyloliquefaciens subsp. plantarum)).